We begin with the raw amino-acid sequence, 741 residues long: NAD(P)H-quinone oxidoreductase subunit 5, chloroplastic (741 aa).

Transmembrane regions (helical) follow at residues 9-29 (WIIP…LLLV), 40-60 (WAFP…DLSI), 89-109 (IDPL…MVLI), 122-139 (LRFF…LGLV), 147-167 (IHIF…FWFT), 185-205 (GDFG…SLEF), 219-239 (NGVN…GAVA), 258-278 (TPIS…FLVA), 280-300 (LLPI…LGII), 396-416 (TTFL…CFWS), 425-445 (WLYS…TAFY), 544-564 (LFPL…GIPF), 603-623 (IYSV…YGSV), and 719-739 (YLFV…FYFL).

It belongs to the complex I subunit 5 family. In terms of assembly, NDH is composed of at least 16 different subunits, 5 of which are encoded in the nucleus.

Its subcellular location is the plastid. It localises to the chloroplast thylakoid membrane. The enzyme catalyses a plastoquinone + NADH + (n+1) H(+)(in) = a plastoquinol + NAD(+) + n H(+)(out). It catalyses the reaction a plastoquinone + NADPH + (n+1) H(+)(in) = a plastoquinol + NADP(+) + n H(+)(out). Functionally, NDH shuttles electrons from NAD(P)H:plastoquinone, via FMN and iron-sulfur (Fe-S) centers, to quinones in the photosynthetic chain and possibly in a chloroplast respiratory chain. The immediate electron acceptor for the enzyme in this species is believed to be plastoquinone. Couples the redox reaction to proton translocation, and thus conserves the redox energy in a proton gradient. The protein is NAD(P)H-quinone oxidoreductase subunit 5, chloroplastic (ndhF) of Liriodendron tulipifera (Tuliptree).